Reading from the N-terminus, the 91-residue chain is Large ribosomal subunit protein uL23 (91 aa).

Belongs to the universal ribosomal protein uL23 family. As to quaternary structure, part of the 50S ribosomal subunit. Contacts protein L29, and trigger factor when it is bound to the ribosome.

Its function is as follows. One of the early assembly proteins it binds 23S rRNA. One of the proteins that surrounds the polypeptide exit tunnel on the outside of the ribosome. Forms the main docking site for trigger factor binding to the ribosome. This chain is Large ribosomal subunit protein uL23, found in Staphylococcus aureus (strain USA300).